The sequence spans 41 residues: Histone H2B.3, sperm (41 aa).

Residues 1 to 41 (MPRSPSKSSPKKGSPRKASPKRGGKGAKRAGKGGRRRTVVK) are disordered. 4 short sequence motifs (SPKK motif) span residues 4-7 (SPSK), 9-12 (SPKK), 14-17 (SPRK), and 19-22 (SPKR). The span at 9-41 (SPKKGSPRKASPKRGGKGAKRAGKGGRRRTVVK) shows a compositional bias: basic residues. S14 and S19 each carry phosphoserine.

It belongs to the histone H2B family. As to quaternary structure, the nucleosome is a histone octamer containing two molecules each of H2A, H2B, H3 and H4 assembled in one H3-H4 heterotetramer and two H2A-H2B heterodimers. The octamer wraps approximately 147 bp of DNA. In terms of processing, monoubiquitination gives a specific tag for epigenetic transcriptional activation and is also prerequisite for histone H3 'Lys-4' and 'Lys-79' methylation. Post-translationally, phosphorylated on SPKK motifs 3 and 4; which may regulate DNA binding. Dephosphorylated during maturation of spermatids to mature sperm and rephosphorylated at fertilization.

Its subcellular location is the nucleus. It is found in the chromosome. In terms of biological role, core component of nucleosome. Nucleosomes wrap and compact DNA into chromatin, limiting DNA accessibility to the cellular machineries which require DNA as a template. Histones thereby play a central role in transcription regulation, DNA repair, DNA replication and chromosomal stability. DNA accessibility is regulated via a complex set of post-translational modifications of histones, also called histone code, and nucleosome remodeling. This chain is Histone H2B.3, sperm, found in Echinus esculentus (Sea urchin).